The sequence spans 382 residues: Chorismate synthase (382 aa).

2 residues coordinate NADP(+): Arg-39 and Arg-45. Residues 127–129 (RAS), 245–246 (QA), Gly-290, 305–309 (KPIPT), and Arg-331 each bind FMN.

It belongs to the chorismate synthase family. As to quaternary structure, homotetramer. FMNH2 is required as a cofactor.

The enzyme catalyses 5-O-(1-carboxyvinyl)-3-phosphoshikimate = chorismate + phosphate. It functions in the pathway metabolic intermediate biosynthesis; chorismate biosynthesis; chorismate from D-erythrose 4-phosphate and phosphoenolpyruvate: step 7/7. Its function is as follows. Catalyzes the anti-1,4-elimination of the C-3 phosphate and the C-6 proR hydrogen from 5-enolpyruvylshikimate-3-phosphate (EPSP) to yield chorismate, which is the branch point compound that serves as the starting substrate for the three terminal pathways of aromatic amino acid biosynthesis. This reaction introduces a second double bond into the aromatic ring system. In Desulfitobacterium hafniense (strain Y51), this protein is Chorismate synthase.